We begin with the raw amino-acid sequence, 212 residues long: Sclerostin (212 aa).

The first 23 residues, 1–23 (MQLSLALCLVCLLVHAAFRVVEG), serve as a signal peptide directing secretion. N52 is a glycosylation site (N-linked (GlcNAc...) asparagine). Disulfide bonds link C79-C133, C93-C147, C104-C164, and C108-C166. Residues 81–171 (ELHFTRYVTD…ASCKCKRLTR (91 aa)) enclose the CTCK domain. Residue N174 is glycosylated (N-linked (GlcNAc...) asparagine). The interval 179–212 (KDFGPEAARPQTGRKLRPRARGTKASRAELENAY) is disordered. A compositionally biased stretch (basic residues) spans 190 to 202 (TGRKLRPRARGTK).

The protein belongs to the sclerostin family. As to quaternary structure, interacts with LRP4 (via the extracellular domain); the interaction facilitates the inhibition of Wnt signaling. Interacts with LRP5 (via the first two YWTD-EGF repeat domains); the interaction inhibits Wnt-mediated signaling. Interacts with LRP6.

The protein resides in the secreted. Its subcellular location is the extracellular space. It localises to the extracellular matrix. In terms of biological role, negative regulator of bone growth that acts through inhibition of Wnt signaling and bone formation. The sequence is that of Sclerostin from Bos taurus (Bovine).